A 423-amino-acid polypeptide reads, in one-letter code: Cyclin-B2-1 (423 aa).

The disordered stretch occupies residues 1 to 61; the sequence is MDRASENRRL…EKSGKEEQKP (61 aa). Positions 49-60 are enriched in basic and acidic residues; sequence PMLEKSGKEEQK.

It belongs to the cyclin family. Cyclin AB subfamily. As to quaternary structure, interacts with CDKB2-1. In terms of tissue distribution, expressed in the intercalary meristem and the elongation zone of internodes. Expressed in adventitious roots at all nodes under submergence conditions.

Functionally, involved in the control of the cell cycle at the G2/M (mitosis) transition. May activate CDKB2-1 kinase. This is Cyclin-B2-1 (CYCB2-1) from Oryza sativa subsp. indica (Rice).